The following is a 273-amino-acid chain: Large ribosomal subunit protein uL2 (273 aa).

Disordered regions lie at residues 35-54 (DKKD…TRHI) and 222-273 (GMAM…RRNK). The span at 229 to 239 (DHPHGGGEGRN) shows a compositional bias: basic and acidic residues. A compositionally biased stretch (basic residues) spans 253–273 (KGFKTRKNKRTDKYIVRRRNK).

Belongs to the universal ribosomal protein uL2 family. In terms of assembly, part of the 50S ribosomal subunit. Forms a bridge to the 30S subunit in the 70S ribosome.

One of the primary rRNA binding proteins. Required for association of the 30S and 50S subunits to form the 70S ribosome, for tRNA binding and peptide bond formation. It has been suggested to have peptidyltransferase activity; this is somewhat controversial. Makes several contacts with the 16S rRNA in the 70S ribosome. This chain is Large ribosomal subunit protein uL2, found in Aeromonas hydrophila subsp. hydrophila (strain ATCC 7966 / DSM 30187 / BCRC 13018 / CCUG 14551 / JCM 1027 / KCTC 2358 / NCIMB 9240 / NCTC 8049).